Consider the following 306-residue polypeptide: Ribosomal protein L11 methyltransferase (306 aa).

The S-adenosyl-L-methionine site is built by Thr139, Gly173, Asp195, and Asn242.

This sequence belongs to the methyltransferase superfamily. PrmA family.

The protein localises to the cytoplasm. The enzyme catalyses L-lysyl-[protein] + 3 S-adenosyl-L-methionine = N(6),N(6),N(6)-trimethyl-L-lysyl-[protein] + 3 S-adenosyl-L-homocysteine + 3 H(+). In terms of biological role, methylates ribosomal protein L11. The sequence is that of Ribosomal protein L11 methyltransferase from Nostoc sp. (strain PCC 7120 / SAG 25.82 / UTEX 2576).